Reading from the N-terminus, the 120-residue chain is Large ribosomal subunit protein uL18 (120 aa).

Residues 1–10 (MKLTRRESKE) show a composition bias toward basic and acidic residues. The segment at 1 to 26 (MKLTRRESKERRHRRVRGKVQGSPER) is disordered.

This sequence belongs to the universal ribosomal protein uL18 family. As to quaternary structure, part of the 50S ribosomal subunit; part of the 5S rRNA/L5/L18/L25 subcomplex. Contacts the 5S and 23S rRNAs.

Its function is as follows. This is one of the proteins that bind and probably mediate the attachment of the 5S RNA into the large ribosomal subunit, where it forms part of the central protuberance. In Nostoc sp. (strain PCC 7120 / SAG 25.82 / UTEX 2576), this protein is Large ribosomal subunit protein uL18.